A 155-amino-acid chain; its full sequence is Ribonuclease H (155 aa).

The region spanning 1–146 is the RNase H type-1 domain; it reads MNALFAWTDG…ADELARAGMA (146 aa). Positions 9, 52, 74, and 138 each coordinate Mg(2+).

It belongs to the RNase H family. In terms of assembly, monomer. It depends on Mg(2+) as a cofactor.

The protein localises to the cytoplasm. The enzyme catalyses Endonucleolytic cleavage to 5'-phosphomonoester.. Functionally, endonuclease that specifically degrades the RNA of RNA-DNA hybrids. This is Ribonuclease H from Paracoccus denitrificans (strain Pd 1222).